The chain runs to 436 residues: MTRLQNLTTRQGERIAVVSGLRTPFARQATAFNGVPALDMGKMVVNEMLQELDFDPKLIEQVVFGQVVQMPEAPNIAREIVLGTGMHIGTDAYSVTRACATSFQAAANVAESIISGTIDIGIAGGADSSSVLPIGVSKKLAATLLALSKARTMSKRLKLLSTLSVKDLMPVPPAVAEYSTGISMGQTAEQMAKSHGITRQEQDALAYRSHTLAAKAWKDGLIRGEVMTAFPEPYGQWIDKDNNIREDSTLESYAKLRPAFDRKFGTVTAANSTPLTDGAAAILLMREGRAKELGLKPLGYIRSYAFSAIGVEQDMLMGPSYATPMALDRAGISLSDLTLIDMHEAFAAQTLANVKMFGSKKFAQENLGRSQAIGEIDMDKFNVLGGSLAYGHPFAATGARMITQTLRELQRRGGGFALNTACAAGGLGAAMILEAE.

Cys-99 (acyl-thioester intermediate) is an active-site residue. Active-site proton acceptor residues include His-392 and Cys-422.

This sequence belongs to the thiolase-like superfamily. Thiolase family. Heterotetramer of two alpha chains (FadJ) and two beta chains (FadI).

The protein localises to the cytoplasm. It carries out the reaction an acyl-CoA + acetyl-CoA = a 3-oxoacyl-CoA + CoA. The protein operates within lipid metabolism; fatty acid beta-oxidation. Catalyzes the final step of fatty acid oxidation in which acetyl-CoA is released and the CoA ester of a fatty acid two carbons shorter is formed. This Photobacterium profundum (strain SS9) protein is 3-ketoacyl-CoA thiolase.